A 308-amino-acid polypeptide reads, in one-letter code: Cis-prenyltransferase 4, chloroplastic (308 aa).

The N-terminal 45 residues, 1-45 (MAFSLQLQQIFVSYTRFCSQPKSITNPLISLKLPSIHPLAFAQNA), are a transit peptide targeting the chloroplast. The active site involves Asp84.

Belongs to the UPP synthase family. Requires Mg(2+) as cofactor. Widely expressed.

It localises to the plastid. The protein localises to the chloroplast. In terms of biological role, uses neryl diphosphate and geranyl diphosphate to catalyze the cis-prenyl chain elongation and produce polyprenyl diphosphate with a chain of 55 carbons. The protein is Cis-prenyltransferase 4, chloroplastic of Solanum lycopersicum (Tomato).